Reading from the N-terminus, the 203-residue chain is NAD(P)H-quinone oxidoreductase subunit M, chloroplastic (203 aa).

The N-terminal 21 residues, 1–21 (MAASSSYMACAKFSMLGWLGG), are a transit peptide targeting the chloroplast. Over residues 34–48 (SPQEQAEVQESQEVN) the composition is skewed to low complexity. The interval 34-61 (SPQEQAEVQESQEVNAQEEEKVKQPVQP) is disordered.

This sequence belongs to the NDH complex subunit M family. Part of the chloroplast NDH complex, composed of a mixture of chloroplast and nucleus encoded subunits. Component of the NDH subcomplex A, at least composed of ndhH, ndhI, ndhJ, ndhK, ndhL, ndhM, ndhN and ndhO.

The protein resides in the plastid. It is found in the chloroplast thylakoid membrane. The enzyme catalyses a plastoquinone + NADH + (n+1) H(+)(in) = a plastoquinol + NAD(+) + n H(+)(out). It carries out the reaction a plastoquinone + NADPH + (n+1) H(+)(in) = a plastoquinol + NADP(+) + n H(+)(out). In terms of biological role, NDH shuttles electrons from NAD(P)H:plastoquinone, via FMN and iron-sulfur (Fe-S) centers, to quinones in the photosynthetic chain and possibly in a chloroplast respiratory chain. The immediate electron acceptor for the enzyme in this species is believed to be plastoquinone. Couples the redox reaction to proton translocation, and thus conserves the redox energy in a proton gradient. This is NAD(P)H-quinone oxidoreductase subunit M, chloroplastic from Populus jackii (Balm of Gilead).